Here is a 160-residue protein sequence, read N- to C-terminus: ATP synthase subunit b, chloroplastic (160 aa).

The chain crosses the membrane as a helical span at residues 12 to 31 (NVINIAILVVILIRFARQVV).

Belongs to the ATPase B chain family. F-type ATPases have 2 components, F(1) - the catalytic core - and F(0) - the membrane proton channel. F(1) has five subunits: alpha(3), beta(3), gamma(1), delta(1), epsilon(1). F(0) has four main subunits: a(1), b(1), b'(1) and c(10-14). The alpha and beta chains form an alternating ring which encloses part of the gamma chain. F(1) is attached to F(0) by a central stalk formed by the gamma and epsilon chains, while a peripheral stalk is formed by the delta, b and b' chains.

The protein resides in the plastid. It is found in the chloroplast thylakoid membrane. In terms of biological role, f(1)F(0) ATP synthase produces ATP from ADP in the presence of a proton or sodium gradient. F-type ATPases consist of two structural domains, F(1) containing the extramembraneous catalytic core and F(0) containing the membrane proton channel, linked together by a central stalk and a peripheral stalk. During catalysis, ATP synthesis in the catalytic domain of F(1) is coupled via a rotary mechanism of the central stalk subunits to proton translocation. Component of the F(0) channel, it forms part of the peripheral stalk, linking F(1) to F(0). The chain is ATP synthase subunit b, chloroplastic from Cyanidioschyzon merolae (strain NIES-3377 / 10D) (Unicellular red alga).